Consider the following 211-residue polypeptide: Uridine kinase (211 aa).

An ATP-binding site is contributed by 13-20; it reads GGSGSGKT.

It belongs to the uridine kinase family.

It localises to the cytoplasm. It carries out the reaction uridine + ATP = UMP + ADP + H(+). The catalysed reaction is cytidine + ATP = CMP + ADP + H(+). It functions in the pathway pyrimidine metabolism; CTP biosynthesis via salvage pathway; CTP from cytidine: step 1/3. The protein operates within pyrimidine metabolism; UMP biosynthesis via salvage pathway; UMP from uridine: step 1/1. The sequence is that of Uridine kinase from Lactobacillus johnsonii (strain CNCM I-12250 / La1 / NCC 533).